Reading from the N-terminus, the 692-residue chain is Glycine--tRNA ligase beta subunit (692 aa).

It belongs to the class-II aminoacyl-tRNA synthetase family. In terms of assembly, tetramer of two alpha and two beta subunits.

The protein localises to the cytoplasm. The enzyme catalyses tRNA(Gly) + glycine + ATP = glycyl-tRNA(Gly) + AMP + diphosphate. This is Glycine--tRNA ligase beta subunit from Hahella chejuensis (strain KCTC 2396).